Reading from the N-terminus, the 388-residue chain is Branched-chain-amino-acid aminotransferase 2, chloroplastic (388 aa).

Residues 1-22 constitute a chloroplast transit peptide; it reads MIKTITSLRKTLVLPLHLHIRT. N6-(pyridoxal phosphate)lysine is present on lysine 235.

This sequence belongs to the class-IV pyridoxal-phosphate-dependent aminotransferase family. Requires pyridoxal 5'-phosphate as cofactor.

The protein localises to the plastid. It localises to the chloroplast. The enzyme catalyses L-leucine + 2-oxoglutarate = 4-methyl-2-oxopentanoate + L-glutamate. It carries out the reaction L-isoleucine + 2-oxoglutarate = (S)-3-methyl-2-oxopentanoate + L-glutamate. It catalyses the reaction L-valine + 2-oxoglutarate = 3-methyl-2-oxobutanoate + L-glutamate. The protein operates within amino-acid biosynthesis; L-isoleucine biosynthesis; L-isoleucine from 2-oxobutanoate: step 4/4. Its pathway is amino-acid biosynthesis; L-leucine biosynthesis; L-leucine from 3-methyl-2-oxobutanoate: step 4/4. It participates in amino-acid biosynthesis; L-valine biosynthesis; L-valine from pyruvate: step 4/4. In terms of biological role, converts 2-oxo acids to branched-chain amino acids. Shows activity with L-Leu, L-Ile and L-Val as amino donors and 2-oxoglutarate as an amino acceptor, but no activity for D-isomers of Leu, Ile, Val, Asp, Glu or Ala. The polypeptide is Branched-chain-amino-acid aminotransferase 2, chloroplastic (BCAT2) (Arabidopsis thaliana (Mouse-ear cress)).